A 476-amino-acid polypeptide reads, in one-letter code: Bifunctional protein HldE (476 aa).

Positions 1–319 (MKLTLPDYDQ…EAIYGSQDSG (319 aa)) are ribokinase. 195-198 (NLSE) provides a ligand contact to ATP. D264 is an active-site residue. Residues 344–476 (MTNGCFDILH…IIEAIRGGKG (133 aa)) are cytidylyltransferase.

In the N-terminal section; belongs to the carbohydrate kinase PfkB family. It in the C-terminal section; belongs to the cytidylyltransferase family. As to quaternary structure, homodimer.

It carries out the reaction D-glycero-beta-D-manno-heptose 7-phosphate + ATP = D-glycero-beta-D-manno-heptose 1,7-bisphosphate + ADP + H(+). The catalysed reaction is D-glycero-beta-D-manno-heptose 1-phosphate + ATP + H(+) = ADP-D-glycero-beta-D-manno-heptose + diphosphate. It participates in nucleotide-sugar biosynthesis; ADP-L-glycero-beta-D-manno-heptose biosynthesis; ADP-L-glycero-beta-D-manno-heptose from D-glycero-beta-D-manno-heptose 7-phosphate: step 1/4. The protein operates within nucleotide-sugar biosynthesis; ADP-L-glycero-beta-D-manno-heptose biosynthesis; ADP-L-glycero-beta-D-manno-heptose from D-glycero-beta-D-manno-heptose 7-phosphate: step 3/4. Functionally, catalyzes the phosphorylation of D-glycero-D-manno-heptose 7-phosphate at the C-1 position to selectively form D-glycero-beta-D-manno-heptose-1,7-bisphosphate. Its function is as follows. Catalyzes the ADP transfer from ATP to D-glycero-beta-D-manno-heptose 1-phosphate, yielding ADP-D-glycero-beta-D-manno-heptose. The protein is Bifunctional protein HldE of Photobacterium profundum (strain SS9).